A 613-amino-acid chain; its full sequence is Ribosome-associated molecular chaperone SSB1 (613 aa).

The residue at position 2 (alanine 2) is an N-acetylalanine. The tract at residues 2–391 (AEGVFQGAIG…ILTGQSTSDE (390 aa)) is nucleotide binding domain (NBD). 16 to 18 (TTY) serves as a coordination point for ATP. Threonine 47 carries the phosphothreonine modification. ATP is bound by residues lysine 73, 205 to 207 (GGT), 271 to 278 (ERAKRTLS), and glycine 342. Residues 392–402 (TKDLLLLDVAP) form an inter-domain linker region. The segment at 403–613 (LSLGVGMQGD…RVVTKAMSSR (211 aa)) is substrate binding domain (SBD). The Contributes to ribosome binding motif lies at 428–430 (KRR). Threonine 431 is modified (phosphothreonine). Residues 516-612 (SEEIEKMVNQ…KRVVTKAMSS (97 aa)) form a lid domain (SBDalpha) region. A Nuclear export signal motif is present at residues 574 to 582 (IEAALSDAL). The required for interaction with ribosomes stretch occupies residues 601–613 (GLKRVVTKAMSSR).

Belongs to the heat shock protein 70 family. Ssb-type Hsp70 subfamily. As to quaternary structure, binds to ribosomes. Binds close to the ribosomal tunnel exit via contacts with both ribosomal proteins RPL35, RPL39 and RPL19, and rRNA. Directly interacts with nascent polypeptides. This interaction is dependent on the ribosome-associated complex (RAC). Interacts with SSE1. Interacts with FES1. Interacts with NAP1.

The protein resides in the cytoplasm. The catalysed reaction is ATP + H2O = ADP + phosphate + H(+). Ribosome-bound, Hsp70-type chaperone that assists in the cotranslational folding of newly synthesized proteins in the cytosol. Stimulates folding by interacting with nascent chains, binding to short, largely hydrophobic sequences exposed by unfolded proteins, thereby stabilizing longer, more slowly translated, and aggregation-prone nascent polypeptides and domains that cannot fold stably until fully synthesized. The Hsp70-protein substrate interaction depends on ATP-binding and on allosteric regulation between the NBD and the SBD. The ATP-bound state is characterized by a fast exchange rate of substrate (low affinity state), while in the ADP-bound state exchange is much slower (high affinity state). During the Hsp70 cycle, the chaperone switches between the ATP-bound state (open conformation) and the ADP-bound state (closed conformation) by major conformational rearrangements involving mainly the lid domain. Ssb cooperates with a specific Hsp40/Hsp70 co-chaperone termed the ribosome-associated complex (RAC), which stimulates the ATPase activity of the ribosome-associated pool of Ssbs and switches it to the high affinity substrate binding state. Hsp110 chaperone SSE1 and FES1 act as nucleotide exchange factors that cause substrate release. This Saccharomyces cerevisiae (strain ATCC 204508 / S288c) (Baker's yeast) protein is Ribosome-associated molecular chaperone SSB1.